The following is a 144-amino-acid chain: Prefoldin subunit alpha (144 aa).

It belongs to the prefoldin subunit alpha family. As to quaternary structure, heterohexamer of two alpha and four beta subunits.

It localises to the cytoplasm. In terms of biological role, molecular chaperone capable of stabilizing a range of proteins. Seems to fulfill an ATP-independent, HSP70-like function in archaeal de novo protein folding. The polypeptide is Prefoldin subunit alpha (Methanococcus maripaludis (strain DSM 14266 / JCM 13030 / NBRC 101832 / S2 / LL)).